The chain runs to 175 residues: NADH-ubiquinone oxidoreductase chain 6 (175 aa).

The next 5 membrane-spanning stretches (helical) occupy residues 1 to 21, 25 to 45, 47 to 67, 88 to 108, and 149 to 169; these read MTMYIAFILSTIFVIGFVGFS, SPIYGGLGLIVSGGVGCGIVL, FGGSFLGLMVFLIYLGGMLVV, TVFGAFVSGLMMEFCMVYYAL, and YGTWLVIVTGWSLLIGVVVIM.

Belongs to the complex I subunit 6 family. As to quaternary structure, core subunit of respiratory chain NADH dehydrogenase (Complex I) which is composed of 45 different subunits.

Its subcellular location is the mitochondrion inner membrane. The catalysed reaction is a ubiquinone + NADH + 5 H(+)(in) = a ubiquinol + NAD(+) + 4 H(+)(out). Core subunit of the mitochondrial membrane respiratory chain NADH dehydrogenase (Complex I) which catalyzes electron transfer from NADH through the respiratory chain, using ubiquinone as an electron acceptor. Essential for the catalytic activity and assembly of complex I. The sequence is that of NADH-ubiquinone oxidoreductase chain 6 (MT-ND6) from Sus scrofa (Pig).